Here is a 596-residue protein sequence, read N- to C-terminus: Proton channel OTOP3 (596 aa).

Low complexity predominate over residues 1–21 (MGRGARAAAAQSRWGRASRAS). Positions 1 to 59 (MGRGARAAAAQSRWGRASRASVSPGRTIRSAPAVGEAQETEAAPEKENRVDVGAEERAA) are disordered. Topologically, residues 1-88 (MGRGARAAAA…RDRQAQKAGQ (88 aa)) are cytoplasmic. A phosphoserine mark is found at serine 21 and serine 23. The segment covering 43–59 (APEKENRVDVGAEERAA) has biased composition (basic and acidic residues). Residues 89–109 (LFSGLLALNVVFLGGAFICSM) traverse the membrane as a helical segment. The Extracellular portion of the chain corresponds to 110 to 119 (IFNKVAVTLG). A helical membrane pass occupies residues 120–143 (DVWILLATLKVLSLLWLLYYVAST). The Cytoplasmic segment spans residues 144–159 (TRRPHAVLYQDPHAGP). The chain crosses the membrane as a helical span at residues 160 to 181 (LWVRGSLVLFGSCTFCLNIFRV). The Extracellular segment spans residues 182–193 (GYDVSHIRCKSQ). A helical membrane pass occupies residues 194–217 (LDLVFSVIEMVFIGVQTWVLWKHC). At 218–225 (KDCVRVQT) the chain is on the cytoplasmic side. A helical transmembrane segment spans residues 226–248 (NFTRCGLMLTLATNLLLWVLAVT). At 249 to 295 (NDSMHREIEAELGILMEKSTGNETNTCLCLNATACEAFRRGFLMLYP) the chain is on the extracellular side. Residues 296-312 (FSTEYCLICCAVLFVMW) traverse the membrane as a helical segment. Over 313 to 338 (KNVGRHVAPHMGAHPATAPFHLHGAI) the chain is Cytoplasmic. Residues 339 to 358 (FGPLLGLLVLLAGVCVFVLF) form a helical membrane-spanning segment. Residues 359–372 (QIEASGPAIACQYF) are Extracellular-facing. A helical membrane pass occupies residues 373 to 395 (TLYYAFYVAVLPTMSLACLAGTA). The Cytoplasmic portion of the chain corresponds to 396–413 (IHGLEERELDTVKNPTRS). A helical transmembrane segment spans residues 414 to 435 (LDVVLLMGAALGQMGIAYFSIV). The Extracellular portion of the chain corresponds to 436–446 (AIVAKRPHELL). The helical transmembrane segment at 447–469 (NRLILAYSLLLILQHIAQNLFII) threads the bilayer. At 470-529 (EGLHRRPLWETVPEGLAGKQEAEPPRRGSLLELGQGLQRASLAYIHSYSHLNWKRRALKE) the chain is on the cytoplasmic side. The chain crosses the membrane as a helical span at residues 530 to 547 (ISLFLILCNITLWMMPAF). Residues 548–566 (GIHPEFENGLEKDFYGYQI) are Extracellular-facing. A helical transmembrane segment spans residues 567 to 589 (WFAIVNFGLPLGVFYRMHSVGGL). Topologically, residues 590–596 (VEVYLGA) are cytoplasmic.

Belongs to the otopetrin family. Homodimer.

The protein localises to the cell membrane. The catalysed reaction is H(+)(in) = H(+)(out). With respect to regulation, activated by extracellular acidification. Activated by Zn(2+) under non-acidic conditions. In terms of biological role, proton-selective channel gated by extracellular protons. The chain is Proton channel OTOP3 from Homo sapiens (Human).